The following is a 327-amino-acid chain: Vacuolar protein sorting-associated protein 26A (327 aa).

A disordered region spans residues 306–327 (RTNFHQRFESPDSQASAEQPEM). Residue Ser315 is modified to Phosphoserine. The segment covering 316-327 (PDSQASAEQPEM) has biased composition (polar residues).

Belongs to the VPS26 family. As to quaternary structure, component of the heterotrimeric retromer cargo-selective complex (CSC), also described as vacuolar protein sorting subcomplex (VPS), formed by VPS26 (VPS26A or VPS26B), VPS29 and VPS35. The CSC has a highly elongated structure with VPS26 and VPS29 binding independently at opposite distal ends of VPS35 as central platform. The CSC is believed to associate with variable sorting nexins to form functionally distinct retromer complex variants. The originally described retromer complex (also called SNX-BAR retromer) is a pentamer containing the CSC and a heterodimeric membrane-deforming subcomplex formed between SNX1 or SNX2 and SNX5 or SNX6 (also called SNX-BAR subcomplex); the respective CSC and SNX-BAR subcomplexes associate with low affinity. The CSC associates with SNX3 to form a SNX3-retromer complex. The CSC associates with SNX27, the WASH complex and the SNX-BAR subcomplex to form the SNX27-retromer complex. Interacts with VPS29, VPS35, SNX27. Interacts with SNX1, SNX2, SNX5, SNX6, SNX3, RAB7A, ECPAS, EHD1, WASHC5, SORL1.

It is found in the cytoplasm. The protein resides in the endosome membrane. Its subcellular location is the early endosome. In terms of biological role, acts as a component of the retromer cargo-selective complex (CSC). The CSC is believed to be the core functional component of retromer or respective retromer complex variants acting to prevent missorting of selected transmembrane cargo proteins into the lysosomal degradation pathway. The recruitment of the CSC to the endosomal membrane involves RAB7A and SNX3. The SNX-BAR retromer mediates retrograde transport of cargo proteins from endosomes to the trans-Golgi network (TGN) and is involved in endosome-to-plasma membrane transport for cargo protein recycling. The SNX3-retromer mediates the retrograde endosome-to-TGN transport of WLS distinct from the SNX-BAR retromer pathway. The SNX27-retromer is believed to be involved in endosome-to-plasma membrane trafficking and recycling of a broad spectrum of cargo proteins. The CSC complex seems to act as recruitment hub for other proteins, such as the WASH complex and TBC1D5. Required for retrograde transport of lysosomal enzyme receptor IGF2R. Required to regulate transcytosis of the polymeric immunoglobulin receptor (pIgR-pIgA). Required for the endosomal localization of WASHC2 (indicative for the WASH complex). Required for the endosomal localization of TBC1D5. Mediates retromer cargo recognition of SORL1 and is involved in trafficking of SORL1 implicated in sorting and processing of APP. Involved in retromer-independent lysosomal sorting of F2R. Involved in recycling of ADRB2. Acts redundantly with VSP26B in SNX-27 mediated endocytic recycling of SLC2A1/GLUT1. Enhances the affinity of SNX27 for PDZ-binding motifs in cargo proteins. In Mus musculus (Mouse), this protein is Vacuolar protein sorting-associated protein 26A (Vps26a).